A 346-amino-acid polypeptide reads, in one-letter code: Signal recognition particle receptor FtsY (346 aa).

GTP is bound by residues G143 to T150, D225 to R229, and T289 to D292.

The protein belongs to the GTP-binding SRP family. FtsY subfamily. Part of the signal recognition particle protein translocation system, which is composed of SRP and FtsY.

It is found in the cell membrane. The protein resides in the cytoplasm. It catalyses the reaction GTP + H2O = GDP + phosphate + H(+). Its function is as follows. Involved in targeting and insertion of nascent membrane proteins into the cytoplasmic membrane. Acts as a receptor for the complex formed by the signal recognition particle (SRP) and the ribosome-nascent chain (RNC). The chain is Signal recognition particle receptor FtsY from Mycoplasma genitalium (strain ATCC 33530 / DSM 19775 / NCTC 10195 / G37) (Mycoplasmoides genitalium).